The chain runs to 499 residues: Probable cytosol aminopeptidase (499 aa).

Mn(2+) is bound by residues lysine 263 and aspartate 268. The active site involves lysine 275. Mn(2+) is bound by residues aspartate 286, aspartate 345, and glutamate 347. Arginine 349 is an active-site residue.

This sequence belongs to the peptidase M17 family. Requires Mn(2+) as cofactor.

It localises to the cytoplasm. It carries out the reaction Release of an N-terminal amino acid, Xaa-|-Yaa-, in which Xaa is preferably Leu, but may be other amino acids including Pro although not Arg or Lys, and Yaa may be Pro. Amino acid amides and methyl esters are also readily hydrolyzed, but rates on arylamides are exceedingly low.. The catalysed reaction is Release of an N-terminal amino acid, preferentially leucine, but not glutamic or aspartic acids.. Presumably involved in the processing and regular turnover of intracellular proteins. Catalyzes the removal of unsubstituted N-terminal amino acids from various peptides. This Chlamydia trachomatis serovar L2 (strain ATCC VR-902B / DSM 19102 / 434/Bu) protein is Probable cytosol aminopeptidase.